Reading from the N-terminus, the 2869-residue chain is uncharacterized protein (2869 aa).

Over residues 1 to 10 (MNINRNNIND) the composition is skewed to low complexity. Disordered stretches follow at residues 1–132 (MNIN…SSNK), 171–349 (NNNN…DNYR), 380–485 (FNES…TSSS), 498–517 (KEKH…KPKK), 690–812 (NQNQ…NQNQ), 860–1074 (INNN…INSN), 1108–1175 (INNI…NSNS), 1188–1216 (SNSN…VDVD), 1224–1243 (VFIV…SVKT), 1340–1448 (ESNS…GNNI), 1476–1704 (IDNC…SNYY), 1731–1832 (NSNS…NEGF), and 2725–2773 (DRVR…NNNE). Positions 14-25 (HSTSFNDNFDSF) are enriched in polar residues. Composition is skewed to low complexity over residues 26 to 124 (GNQN…NPKN), 171 to 348 (NNNN…YDNY), 388 to 414 (NNNT…LNNN), 421 to 446 (YYDN…QTNK), and 454 to 478 (KNNN…NSNN). Residues 505-514 (HENGDISESK) are compositionally biased toward basic and acidic residues. Composition is skewed to low complexity over residues 690 to 707 (NQNQ…QNHQ) and 714 to 749 (PQRQ…NQDQ). Basic and acidic residues predominate over residues 750 to 763 (YQDHDHEHEHDHDQ). Residues 764–781 (NQNQNQNQHQSRNQNQDQ) are compositionally biased toward low complexity. The span at 782–795 (YQDHDHEHEHDHDQ) shows a compositional bias: basic and acidic residues. Low complexity-rich tracts occupy residues 796-812 (NQNQ…NQNQ), 860-891 (INNN…QSQN), 898-911 (DNRI…SSRD), 921-991 (CDFN…SFNN), and 1000-1074 (NNHN…INSN). A compositionally biased stretch (low complexity) spans 1188–1212 (SNSNGFNNNNSNDQRNIDSSSNSDI). Positions 1230–1243 (TSSNKSNRASSVKT) are enriched in polar residues. 2 stretches are compositionally biased toward low complexity: residues 1377–1448 (DNGN…GNNI) and 1476–1639 (IDNC…NDND). The span at 1640 to 1659 (IGNDFDNDNDNDSYIDDDNN) shows a compositional bias: acidic residues. Composition is skewed to low complexity over residues 1660–1704 (VYDN…SNYY), 1731–1823 (NSNS…NNNS), and 2739–2754 (SSSG…SGGS). The span at 2758–2773 (NLDDSENESDSENNNE) shows a compositional bias: acidic residues.

This is an uncharacterized protein from Dictyostelium discoideum (Social amoeba).